We begin with the raw amino-acid sequence, 241 residues long: Meiotically up-regulated gene 130 protein (241 aa).

It localises to the mitochondrion. Has a role in meiosis. The chain is Meiotically up-regulated gene 130 protein (mug130) from Schizosaccharomyces pombe (strain 972 / ATCC 24843) (Fission yeast).